Reading from the N-terminus, the 211-residue chain is Methylthioribulose-1-phosphate dehydratase (211 aa).

Zn(2+)-binding residues include His-105 and His-107.

It belongs to the aldolase class II family. MtnB subfamily. Zn(2+) is required as a cofactor.

The enzyme catalyses 5-(methylsulfanyl)-D-ribulose 1-phosphate = 5-methylsulfanyl-2,3-dioxopentyl phosphate + H2O. It participates in amino-acid biosynthesis; L-methionine biosynthesis via salvage pathway; L-methionine from S-methyl-5-thio-alpha-D-ribose 1-phosphate: step 2/6. In terms of biological role, catalyzes the dehydration of methylthioribulose-1-phosphate (MTRu-1-P) into 2,3-diketo-5-methylthiopentyl-1-phosphate (DK-MTP-1-P). The sequence is that of Methylthioribulose-1-phosphate dehydratase from Acidiphilium cryptum (strain JF-5).